A 140-amino-acid chain; its full sequence is Large ribosomal subunit protein uL22 (140 aa).

Residues 115–140 form a disordered region; that stretch reads AKPAAAKKDPKAAAAKADANAGTKEG.

It belongs to the universal ribosomal protein uL22 family. As to quaternary structure, part of the 50S ribosomal subunit.

In terms of biological role, this protein binds specifically to 23S rRNA; its binding is stimulated by other ribosomal proteins, e.g. L4, L17, and L20. It is important during the early stages of 50S assembly. It makes multiple contacts with different domains of the 23S rRNA in the assembled 50S subunit and ribosome. The globular domain of the protein is located near the polypeptide exit tunnel on the outside of the subunit, while an extended beta-hairpin is found that lines the wall of the exit tunnel in the center of the 70S ribosome. This is Large ribosomal subunit protein uL22 from Heliobacterium modesticaldum (strain ATCC 51547 / Ice1).